The chain runs to 1086 residues: Lysine-specific demethylase 4B (1086 aa).

The JmjN domain occupies 15–57; the sequence is IMTFRPTMDEFRDFNRYVAYIESQGAHRAGLAKIIPPKEWKPR. Tyr-133 provides a ligand contact to 2-oxoglutarate. Positions 146–309 constitute a JmjC domain; that stretch reads VAQWNIGNLR…YGKVATQCTC (164 aa). Residues His-189 and Glu-191 each contribute to the Fe cation site. Residues Asn-199 and Lys-207 each contribute to the 2-oxoglutarate site. Cys-235 and His-241 together coordinate Zn(2+). Lys-242 is a 2-oxoglutarate binding site. Fe cation is bound at residue His-277. Residues Cys-307 and Cys-309 each contribute to the Zn(2+) site. A compositionally biased stretch (basic and acidic residues) spans 379-395; sequence SRPWRKAEEERRREPTR. Disordered stretches follow at residues 379 to 536 and 575 to 624; these read SRPW…PPGA and PMEL…LSVV. The span at 401-410 shows a compositional bias: basic residues; it reads SHRRRSQPKK. Over residues 441-450 the composition is skewed to acidic residues; sequence MPEDEEEEEL. The segment covering 456-467 has biased composition (basic and acidic residues); it reads HEAEGVEEDGRG. Basic residues predominate over residues 468–480; it reads KPRPTKARNKKKT. Positions 512 to 522 are enriched in low complexity; it reads GPAMGPMAAEG. The span at 585-597 shows a compositional bias: polar residues; that stretch reads QAQAGDSQGTTPF. The residue at position 599 (Lys-599) is an N6-acetyllysine. The segment at 719-777 adopts a PHD-type 1 zinc-finger fold; that stretch reads MCFTSSGENTEPLPANSYVGEDGTSPLISCAHCCLQVHASCYGVRPELAKEGWTCSRCA. A C2HC pre-PHD-type zinc finger spans residues 782 to 815; that stretch reads TAECCLCNLRGGALQRTTEHRWIHVICAIAVPEV. The segment at 838–895 adopts a PHD-type 2 zinc-finger fold; sequence LKCIYCRKRMKRVSGACIQCSYEHCSTSFHVTCAHAAGVLMEPDDWPYVVSITCLKHR. 2 Tudor domains span residues 905–962 and 963–1019; these read RTVS…CLRL and GPPP…EELP. Positions 1024–1043 are disordered; the sequence is SRLSLSTGTPQEPSFSGDDV. Positions 1026–1037 are enriched in polar residues; the sequence is LSLSTGTPQEPS.

It belongs to the JHDM3 histone demethylase family. Requires Fe(2+) as cofactor.

The protein localises to the nucleus. The catalysed reaction is N(6),N(6),N(6)-trimethyl-L-lysyl(9)-[histone H3] + 2 2-oxoglutarate + 2 O2 = N(6)-methyl-L-lysyl(9)-[histone H3] + 2 formaldehyde + 2 succinate + 2 CO2. Histone demethylase that specifically demethylates 'Lys-9' of histone H3, thereby playing a role in histone code. Does not demethylate histone H3 'Lys-4', H3 'Lys-27', H3 'Lys-36' nor H4 'Lys-20'. Only able to demethylate trimethylated H3 'Lys-9', with a weaker activity than KDM4A, KDM4C and KDM4D. Demethylation of Lys residue generates formaldehyde and succinate. Plays a critical role in the development of the central nervous system (CNS). The chain is Lysine-specific demethylase 4B (Kdm4b) from Mus musculus (Mouse).